Reading from the N-terminus, the 474-residue chain is Alpha-galactosidase (474 aa).

The first 22 residues, 1–22 (MINFSLLTSIVLLASKVVGVSP), serve as a signal peptide directing secretion. 2 disulfide bridges follow: Cys-43-Cys-75 and Cys-122-Cys-152. Asn-44 is a glycosylation site (N-linked (GlcNAc...) asparagine). Residues Asp-73, Asp-74, and Lys-148 each contribute to the substrate site. The active-site Nucleophile is the Asp-150. An N-linked (GlcNAc...) asparagine glycan is attached at Asn-176. Arg-206 serves as a coordination point for substrate. Asp-210 functions as the Proton donor in the catalytic mechanism. Disulfide bonds link Cys-222–Cys-238 and Cys-224–Cys-231. Gln-252 provides a ligand contact to substrate. Asn-271, Asn-414, Asn-423, Asn-436, and Asn-455 each carry an N-linked (GlcNAc...) asparagine glycan.

It belongs to the glycosyl hydrolase 27 family. In terms of assembly, homotetramer.

It localises to the secreted. The catalysed reaction is Hydrolysis of terminal, non-reducing alpha-D-galactose residues in alpha-D-galactosides, including galactose oligosaccharides, galactomannans and galactolipids.. This is Alpha-galactosidase (MEL) from Torulaspora delbrueckii (Yeast).